Here is a 109-residue protein sequence, read N- to C-terminus: Small ribosomal subunit protein uS17 (109 aa).

The protein belongs to the universal ribosomal protein uS17 family. Part of the 30S ribosomal subunit.

Functionally, one of the primary rRNA binding proteins, it binds specifically to the 5'-end of 16S ribosomal RNA. This is Small ribosomal subunit protein uS17 from Methanosarcina mazei (strain ATCC BAA-159 / DSM 3647 / Goe1 / Go1 / JCM 11833 / OCM 88) (Methanosarcina frisia).